A 344-amino-acid chain; its full sequence is Acyl-CoA ligase clz12 (344 aa).

2 AMP-binding regions span residues 2-239 (VQRS…IIKV) and 248-322 (ELET…PSGK).

Belongs to the ATP-dependent AMP-binding enzyme family.

It participates in secondary metabolite biosynthesis. In terms of biological role, acyl-CoA ligase; part of the gene cluster that mediates the biosynthesis of squalestatin S1 (SQS1, also known as zaragozic acid A), a heavily oxidized fungal polyketide that offers potent cholesterol lowering activity by targeting squalene synthase (SS). SQS1 is composed of a 2,8-dioxobicyclic[3.2.1]octane-3,4,5-tricarboxyclic acid core that is connected to two lipophilic polyketide arms. These initial steps feature the priming of an unusual benzoic acid starter unit onto the highly reducing polyketide synthase clz14, followed by oxaloacetate extension and product release to generate a tricarboxylic acid containing product. The phenylalanine ammonia lyase (PAL) clz10 and the acyl-CoA ligase clz12 are involved in transforming phenylalanine into benzoyl-CoA. The citrate synthase-like protein clz17 is involved in connecting the C-alpha-carbons of the hexaketide chain and oxaloacetate to afford the tricarboxylic acid unit. The potential hydrolytic enzymes, clz11 and clz13, are in close proximity to pks2 and may participate in product release. On the other side, the tetraketide arm is synthesized by a the squalestatin tetraketide synthase clz2 and enzymatically esterified to the core in the last biosynthetic step, by the acetyltransferase clz6. The biosynthesis of the tetraketide must involve 3 rounds of chain extension. After the first and second rounds methyl-transfer occurs, and in all rounds of extension the ketoreductase and dehydratase are active. The enoyl reductase and C-MeT of clz2 are not active in the final round of extension. The acetyltransferase clz6 appears to have a broad substrate selectivity for its acyl CoA substrate, allowing the in vitro synthesis of novel squalestatins. The biosynthesis of SQS1 requires several oxidative steps likely performed by oxidoreductases clz3, clz15 and clz16. Finally, in support of the identification of the cluster as being responsible for SQS1 production, the cluster contains a gene encoding a putative squalene synthase (SS) clz20, suggesting a likely mechanism for self-resistance. The protein is Acyl-CoA ligase clz12 of Cochliobolus lunatus (Filamentous fungus).